Here is a 104-residue protein sequence, read N- to C-terminus: Large ribosomal subunit protein uL23 (104 aa).

Belongs to the universal ribosomal protein uL23 family. In terms of assembly, part of the 50S ribosomal subunit. Contacts protein L29, and trigger factor when it is bound to the ribosome.

Functionally, one of the early assembly proteins it binds 23S rRNA. One of the proteins that surrounds the polypeptide exit tunnel on the outside of the ribosome. Forms the main docking site for trigger factor binding to the ribosome. In Polynucleobacter asymbioticus (strain DSM 18221 / CIP 109841 / QLW-P1DMWA-1) (Polynucleobacter necessarius subsp. asymbioticus), this protein is Large ribosomal subunit protein uL23.